Here is a 1806-residue protein sequence, read N- to C-terminus: Focadhesin (1806 aa).

A disordered region spans residues 733–760 (ARPIPKQPEVEDEVKQNEEENEEEEDIS).

Its subcellular location is the cell junction. The protein resides in the focal adhesion. The protein localises to the cytoplasm. It localises to the cytosol. In terms of biological role, required for the maintenance of SKIC2 and SKIC3 proteostatic levels in the liver. May be involved in the regulation of RNA degradation by the exosome complex. The protein is Focadhesin (focad) of Danio rerio (Zebrafish).